Here is a 1135-residue protein sequence, read N- to C-terminus: Integrin alpha-7 (1135 aa).

The first 33 residues, M1 to A33, serve as a signal peptide directing secretion. Over F34–W1036 the chain is Extracellular. FG-GAP repeat units lie at residues V38 to C103, R110 to V165, E185 to Q238, D248 to L305, I306 to D367, I368 to T423, and Q427 to R486. Residue N86 is glycosylated (N-linked (GlcNAc...) asparagine). 3 cysteine pairs are disulfide-bonded: C94-C103, C140-C163, and C184-C197. 13 residues coordinate Ca(2+): D328, N330, D332, D336, D390, N392, D394, D398, D448, D450, N452, Y454, and D456. 6 cysteine pairs are disulfide-bonded: C495-C502, C508-C571, C637-C643, C736-C747, C894-C948, and C955-C960. N741 carries N-linked (GlcNAc...) asparagine glycosylation. A compositionally biased stretch (basic and acidic residues) spans V905 to G916. A disordered region spans residues V905–W933. N943 carries N-linked (GlcNAc...) asparagine glycosylation. N-linked (GlcNAc...) asparagine glycosylation is found at N979 and N999. Residues W1037–L1057 traverse the membrane as a helical segment. The Cytoplasmic segment spans residues W1058–A1135. The short motif at G1061 to R1065 is the GFFKR motif element. 3 consecutive repeat copies span residues D1111–P1114, D1119–P1122, and D1127–P1130. Positions D1111–P1130 are 3 X 4 AA repeats of D-X-H-P.

Belongs to the integrin alpha chain family. In terms of assembly, interacts (via C-terminus intracellular tail region) with CIB1; the interaction is stabilized/increased in a calcium- and magnesium-dependent manner. Heterodimer of an alpha and a beta subunit. The alpha subunit is composed of a heavy and a light chain linked by a disulfide bond. Alpha-7 associates with beta-1. Interacts with COMP. ADP-ribosylated on at least two sites of the extracellular domain in skeletal myotubes. Post-translationally, a 70 kDa form is created by proteolytic cleavage. Cleavage is elevated during myogenic differentiation and the cleaved form enhances cell adhesion and spreading on laminin. As to expression, expressed in skeletal and cardiac muscle. Expressed in replicating myoblasts. In differentiated muscle fibers localizes between fibers and the surrounding matrix. Isoform Alpha-7X1A and isoform Alpha-7X1B are expressed at myotendinous and neuromuscular junctions; isoform Alpha-7X1C is expressed at neuromuscular junctions and at extrasynaptic sites.

The protein resides in the membrane. Integrin alpha-7/beta-1 is the primary laminin receptor on skeletal myoblasts and adult myofibers. During myogenic differentiation, it may induce changes in the shape and mobility of myoblasts, and facilitate their localization at laminin-rich sites of secondary fiber formation. Involved in the maintenance of the myofibers cytoarchitecture as well as for their anchorage, viability and functional integrity. Required to promote contractile phenotype acquisition in differentiated airway smooth muscle (ASM) cells. Acts as a Schwann cell receptor for laminin-2. Acts as a receptor of COMP and mediates its effect on vascular smooth muscle cells (VSMCs) maturation. The polypeptide is Integrin alpha-7 (Itga7) (Rattus norvegicus (Rat)).